We begin with the raw amino-acid sequence, 567 residues long: Oxygen-dependent choline dehydrogenase (567 aa).

4 to 33 serves as a coordination point for FAD; it reads DYIIIGAGSAGNVLAARLTEDADVTVLLLE. H473 acts as the Proton acceptor in catalysis.

The protein belongs to the GMC oxidoreductase family. It depends on FAD as a cofactor.

It carries out the reaction choline + A = betaine aldehyde + AH2. The enzyme catalyses betaine aldehyde + NAD(+) + H2O = glycine betaine + NADH + 2 H(+). It participates in amine and polyamine biosynthesis; betaine biosynthesis via choline pathway; betaine aldehyde from choline (cytochrome c reductase route): step 1/1. Its function is as follows. Involved in the biosynthesis of the osmoprotectant glycine betaine. Catalyzes the oxidation of choline to betaine aldehyde and betaine aldehyde to glycine betaine at the same rate. This Yersinia pestis bv. Antiqua (strain Antiqua) protein is Oxygen-dependent choline dehydrogenase.